Reading from the N-terminus, the 549-residue chain is Undecaprenyl phosphate-alpha-4-amino-4-deoxy-L-arabinose arabinosyl transferase 1 (549 aa).

12 helical membrane passes run 9-29, 80-102, 112-132, 133-153, 176-196, 204-224, 257-277, 290-310, 312-332, 342-362, 377-397, and 402-422; these read LLLIAFGLFYLLPLATHGLWI, LFGVRVASALSTGLSVVLAYLLA, SLASALLYMSFTVVALQAGYA, NLDPQFTFWVNLSLVALWFTF, FMTKGFLAWLLPVLVALPYAI, LLIYGGIGVLVAILISLPWAL, WWYYLPLLVGFSVPWVLLLPA, SSGFLLLWLVLPLAFFSLSKG, LPAYILPCLLPLALLMGNTLV, LLAFNGVLNLVAGLLGLLALV, HLVLVYVLLLGWILSNLLQAM, and LWAAPALGSFLLVALAPAALP.

The protein belongs to the glycosyltransferase 83 family.

The protein localises to the cell inner membrane. The catalysed reaction is 4-amino-4-deoxy-alpha-L-arabinopyranosyl di-trans,octa-cis-undecaprenyl phosphate + lipid IVA = lipid IIA + di-trans,octa-cis-undecaprenyl phosphate.. It participates in lipopolysaccharide metabolism; 4-amino-4-deoxy-beta-L-arabinose-lipid A biosynthesis. Its function is as follows. Catalyzes the transfer of the L-Ara4N moiety of the glycolipid undecaprenyl phosphate-alpha-L-Ara4N to lipid A. The modified arabinose is attached to lipid A and is required for resistance to polymyxin and cationic antimicrobial peptides. The sequence is that of Undecaprenyl phosphate-alpha-4-amino-4-deoxy-L-arabinose arabinosyl transferase 1 from Pseudomonas fluorescens (strain ATCC BAA-477 / NRRL B-23932 / Pf-5).